The sequence spans 347 residues: MKPPILIIIMATIMTGTMIVMLSSHWLLIWIGFEMNMLAIIPILMKKYNPRAMEASTKYFLTQATASMLLMMGVTINLLYSGQWVISKISNPIASIMMTTALTMKLGLSPFHFWVPEVTQGITLMSGMILLTWQKIAPMSILYQISPSINTNLLMLMALTSVLVGGWGGLNQTQLRKIMAYSSIAHMGWMAAIITYNPTMMVLNLTLYILMTLSTFMLFMLNSSTTTLSLSHMWNKFPLITSMILILMLSLGGLPPLSGFIPKWMIIQELTKNNMIIIPTLMAITALLNLYFYLRLTYSTALTMFPSTNNMKMKWQFEYTKKATLLPPLIITSTMLLPLTPMLSVLD.

The next 10 membrane-spanning stretches (helical) occupy residues 3–23, 25–45, 66–86, 111–131, 149–169, 178–198, 201–221, 237–257, 274–294, and 325–345; these read PPIL…VMLS, HWLL…PILM, ASML…QWVI, FHFW…MILL, INTN…GWGG, IMAY…TYNP, MVLN…LFML, FPLI…LPPL, NMII…YFYL, and LLPP…MLSV.

This sequence belongs to the complex I subunit 2 family. In terms of assembly, core subunit of respiratory chain NADH dehydrogenase (Complex I) which is composed of 45 different subunits. Interacts with TMEM242.

It is found in the mitochondrion inner membrane. It catalyses the reaction a ubiquinone + NADH + 5 H(+)(in) = a ubiquinol + NAD(+) + 4 H(+)(out). Its function is as follows. Core subunit of the mitochondrial membrane respiratory chain NADH dehydrogenase (Complex I) which catalyzes electron transfer from NADH through the respiratory chain, using ubiquinone as an electron acceptor. Essential for the catalytic activity and assembly of complex I. In Canis lupus familiaris (Dog), this protein is NADH-ubiquinone oxidoreductase chain 2.